The primary structure comprises 404 residues: Protein L-Myc-1b (404 aa).

Disordered stretches follow at residues 175-195 (KKQV…EEID) and 238-331 (QQHN…FLER). The span at 287–315 (VPAQSPTVSASPTHTSYHLKSQPSSPQSS) shows a compositional bias: polar residues. A bHLH domain is found at 321–373 (DKRKTHNFLERKRRNDLRSRFLALRDEIPGLVDCPKTPKVVILTKATEYLRTL). Residues 373–401 (LHVSDRQKAQEKKQLKSKQQQLLRRLAEL) form a leucine-zipper region.

As to quaternary structure, efficient DNA binding requires dimerization with another bHLH protein. Binds DNA as a heterodimer with max.

Its subcellular location is the nucleus. The sequence is that of Protein L-Myc-1b from Danio rerio (Zebrafish).